A 120-amino-acid chain; its full sequence is Holo-[acyl-carrier-protein] synthase (120 aa).

Mg(2+) contacts are provided by aspartate 8 and glutamate 60.

Belongs to the P-Pant transferase superfamily. AcpS family. Requires Mg(2+) as cofactor.

The protein resides in the cytoplasm. The catalysed reaction is apo-[ACP] + CoA = holo-[ACP] + adenosine 3',5'-bisphosphate + H(+). Its function is as follows. Transfers the 4'-phosphopantetheine moiety from coenzyme A to a Ser of acyl-carrier-protein. The chain is Holo-[acyl-carrier-protein] synthase from Anaplasma marginale (strain Florida).